The chain runs to 156 residues: Probable inactive ribonuclease-like protein 13 (156 aa).

The signal sequence occupies residues 1 to 20; it reads MAPAVTRLLFLQLVLGPTLV. The N-linked (GlcNAc...) asparagine glycan is linked to N126.

Belongs to the pancreatic ribonuclease family.

It is found in the secreted. Functionally, does not exhibit any ribonuclease activity. The polypeptide is Probable inactive ribonuclease-like protein 13 (RNASE13) (Homo sapiens (Human)).